The following is a 464-amino-acid chain: Fumarate hydratase class II (464 aa).

Substrate contacts are provided by residues 97–99, 128–131, 138–140, and Thr-186; these read SGT, HPND, and SSN. Catalysis depends on His-187, which acts as the Proton donor/acceptor. Residue Ser-317 is part of the active site. Substrate is bound by residues Ser-318 and 323–325; that span reads KVN.

The protein belongs to the class-II fumarase/aspartase family. Fumarase subfamily. As to quaternary structure, homotetramer.

Its subcellular location is the cytoplasm. The catalysed reaction is (S)-malate = fumarate + H2O. It functions in the pathway carbohydrate metabolism; tricarboxylic acid cycle; (S)-malate from fumarate: step 1/1. Functionally, involved in the TCA cycle. Catalyzes the stereospecific interconversion of fumarate to L-malate. This Leptospira interrogans serogroup Icterohaemorrhagiae serovar copenhageni (strain Fiocruz L1-130) protein is Fumarate hydratase class II.